Consider the following 380-residue polypeptide: Flap endonuclease 1-A (380 aa).

The tract at residues 1-105 (MGIKGLTKLL…EELAKRFSKR (105 aa)) is N-domain. A Mg(2+)-binding site is contributed by Asp-34. Arg-71 is a DNA binding site. Mg(2+)-binding residues include Asp-87, Glu-159, Glu-161, Asp-180, and Asp-182. The tract at residues 123-254 (AVEKLSKRTV…QTALKLIRQH (132 aa)) is I-domain. Glu-159 serves as a coordination point for DNA. Gly-232 and Asp-234 together coordinate DNA. Mg(2+) is bound at residue Asp-234. Residues 336-344 (SQGRLESFF) form an interaction with PCNA region. Positions 351-380 (SAPLKRKETSDKTSKAAAANKKTKAGGKKK) are disordered. Basic and acidic residues predominate over residues 355 to 364 (KRKETSDKTS). A compositionally biased stretch (basic residues) spans 371-380 (KKTKAGGKKK).

It belongs to the XPG/RAD2 endonuclease family. FEN1 subfamily. As to quaternary structure, interacts with PCNA. Three molecules of FEN1 bind to one PCNA trimer with each molecule binding to one PCNA monomer. PCNA stimulates the nuclease activity without altering cleavage specificity. The cofactor is Mg(2+). Post-translationally, phosphorylated. Phosphorylation upon DNA damage induces relocalization to the nuclear plasma.

Its subcellular location is the nucleus. It localises to the nucleolus. It is found in the nucleoplasm. The protein localises to the mitochondrion. Its function is as follows. Structure-specific nuclease with 5'-flap endonuclease and 5'-3' exonuclease activities involved in DNA replication and repair. During DNA replication, cleaves the 5'-overhanging flap structure that is generated by displacement synthesis when DNA polymerase encounters the 5'-end of a downstream Okazaki fragment. It enters the flap from the 5'-end and then tracks to cleave the flap base, leaving a nick for ligation. Also involved in the long patch base excision repair (LP-BER) pathway, by cleaving within the apurinic/apyrimidinic (AP) site-terminated flap. Acts as a genome stabilization factor that prevents flaps from equilibrating into structures that lead to duplications and deletions. Also possesses 5'-3' exonuclease activity on nicked or gapped double-stranded DNA, and exhibits RNase H activity. Also involved in replication and repair of rDNA and in repairing mitochondrial DNA. In Sorghum bicolor (Sorghum), this protein is Flap endonuclease 1-A.